We begin with the raw amino-acid sequence, 268 residues long: Proteasome subunit beta type-4 (268 aa).

The protein belongs to the peptidase T1B family. As to quaternary structure, the 26S proteasome consists of a 20S proteasome core and two 19S regulatory subunits. The 20S proteasome core is composed of 28 subunits that are arranged in four stacked rings, resulting in a barrel-shaped structure. The two end rings are each formed by seven alpha subunits, and the two central rings are each formed by seven beta subunits. The catalytic chamber with the active sites is on the inside of the barrel.

It localises to the cytoplasm. The protein resides in the nucleus. Non-catalytic component of the proteasome, a multicatalytic proteinase complex which is characterized by its ability to cleave peptides with Arg, Phe, Tyr, Leu, and Glu adjacent to the leaving group at neutral or slightly basic pH. The proteasome has an ATP-dependent proteolytic activity. This Drosophila melanogaster (Fruit fly) protein is Proteasome subunit beta type-4 (Prosbeta7).